A 1120-amino-acid chain; its full sequence is Transcriptional repressor NF-X1 (1120 aa).

Positions 9 to 26 (GTFKFNTDAAEFIPQEKK) are interaction with PABPC1 and PABC4. Positions 22–295 (PQEKKNSGLN…LNERPAKSTC (274 aa)) are disordered. 3 positions are modified to phosphoserine: S50, S82, and S95. The span at 73–106 (YHPSGSKPKSQQTSFQSSPCNKSPKSHGLQNQPW) shows a compositional bias: polar residues. A compositionally biased stretch (basic residues) spans 111–120 (NEKHHIRVKK). The span at 124-141 (LAEQTSDTAGLESSTRSE) shows a compositional bias: polar residues. Residues S129 and S150 each carry the phosphoserine modification. 4 stretches are compositionally biased toward basic and acidic residues: residues 142–159 (SGTD…KEVV), 188–202 (LKCE…KPED), 222–254 (SSRK…EGAR), and 282–291 (PKDDLNERPA). Position 326 is a phosphoserine (S326). The segment at 358-409 (CMVCCELVRVTAPVWSCQSCYHVFHLNCIKKWARSPASQADGQSGWRCPACQ) adopts an RING-type; atypical zinc-finger fold. 8 consecutive NF-X1-type zinc fingers follow at residues 453 to 471 (CPHS…PCPA), 506 to 525 (CGQH…PCQI), 567 to 586 (CGNH…QCPR), 632 to 655 (CGSL…PCSR), 694 to 713 (CGRH…KCPL), 721 to 740 (CGLH…TCWQ), 832 to 854 (CGMH…PCKQ), and 863 to 884 (CGHP…ACKA). In terms of domain architecture, R3H spans 994–1062 (LKFVSDVEKE…KRNVVVTAIR (69 aa)). A disordered region spans residues 1081-1109 (QARPPPPIPHHRHQSDKNPGSSNLQKITK). The segment covering 1097-1106 (KNPGSSNLQK) has biased composition (polar residues).

The protein belongs to the NFX1 family. As to quaternary structure, isoform 1 interacts with PABPC1 and PABPC4. In terms of assembly, (Microbial infection) Isoform 1 and isoform 3 interact with human papillomavirus (HPV) type-16 E6 oncoprotein. Isoform 3 is polyubiquitinated in the presence of HPV16 E6 protein; which leads to proteasomal degradation. Isoform 1 is not polyubiquitinated.

The protein resides in the nucleus. In terms of biological role, binds to the X-box motif of MHC class II genes and represses their expression. May play an important role in regulating the duration of an inflammatory response by limiting the period in which MHC class II molecules are induced by interferon-gamma. Isoform 3 binds to the X-box motif of TERT promoter and represses its expression. Together with PABPC1 or PABPC4, isoform 1 acts as a coactivator for TERT expression. Mediates E2-dependent ubiquitination. The sequence is that of Transcriptional repressor NF-X1 (NFX1) from Homo sapiens (Human).